The sequence spans 129 residues: MRHRKSGRQLNRNSSHRQAMFRNMAGSLVRHEIIKTTLPKAKELRRVVEPLITLAKTDNVANRRLAFARTRDNEIVAKLFNELGPRFASRAGGYTRILKCGFRAGDNAPMAYIELVDRAASQAEVVAAE.

The protein belongs to the bacterial ribosomal protein bL17 family. In terms of assembly, part of the 50S ribosomal subunit. Contacts protein L32.

The sequence is that of Large ribosomal subunit protein bL17 from Yersinia pseudotuberculosis serotype O:1b (strain IP 31758).